A 171-amino-acid polypeptide reads, in one-letter code: Lipoprotein signal peptidase (171 aa).

4 helical membrane passes run 12 to 32, 42 to 62, 70 to 90, and 96 to 116; these read LAWLWLSLLVLVIDQATKLYF, IVVIPDYFSWTLAYNTGAAFS, WQRWLFALIAVVVSAVLVVWL, and NETWLAVALALVLGGAIGNLY. Residues aspartate 126 and aspartate 145 contribute to the active site. The chain crosses the membrane as a helical span at residues 137–157; that stretch reads YFPAFNVADSAITVGAVMLAL.

Belongs to the peptidase A8 family.

The protein resides in the cell inner membrane. It catalyses the reaction Release of signal peptides from bacterial membrane prolipoproteins. Hydrolyzes -Xaa-Yaa-Zaa-|-(S,diacylglyceryl)Cys-, in which Xaa is hydrophobic (preferably Leu), and Yaa (Ala or Ser) and Zaa (Gly or Ala) have small, neutral side chains.. The protein operates within protein modification; lipoprotein biosynthesis (signal peptide cleavage). Functionally, this protein specifically catalyzes the removal of signal peptides from prolipoproteins. This is Lipoprotein signal peptidase from Pseudomonas putida (strain ATCC 47054 / DSM 6125 / CFBP 8728 / NCIMB 11950 / KT2440).